We begin with the raw amino-acid sequence, 265 residues long: Aquaporin-5 (265 aa).

Residues 1 to 12 (MKKEVCSLAFLK) are Cytoplasmic-facing. Residues 13–33 (AVFAEFLATLIFVFFGLASAL) traverse the membrane as a helical segment. Residues 34-39 (KWPSAL) are Extracellular-facing. The chain crosses the membrane as a helical span at residues 40-60 (PTILQIALAFGLAIGTLAQAL). The Cytoplasmic portion of the chain corresponds to 61–65 (GPVSG). An intramembrane region (discontinuously helical) is located at residues 66-74 (GHINPAITL). The NPA 1 signature appears at 69 to 71 (NPA). Residues 75–87 (ALLVGNQISLLRA) lie on the Cytoplasmic side of the membrane. Residues 88 to 108 (VFYVVAQLVGAIAGAGILYGL) form a helical membrane-spanning segment. At 109–126 (APGNARGNLAVNSLNNNT) the chain is on the extracellular side. A glycan (N-linked (GlcNAc...) asparagine) is linked at Asn124. Residues 127–147 (TPGQAVVVEMILTFQLALCIF) traverse the membrane as a helical segment. The Cytoplasmic segment spans residues 148–158 (SSTDSRRTSPV). The helical transmembrane segment at 159 to 179 (GSPALSIGLSVTLGHLVGIYF) threads the bilayer. Residue Thr180 is a topological domain, extracellular. The segment at residues 181–191 (GCSMNPARSFG) is an intramembrane region (discontinuously helical). Positions 185-187 (NPA) match the NPA 2 motif. The Extracellular portion of the chain corresponds to 192-203 (PAVVMNRFSPSH). Residues 204–224 (WVFWVGPIVGAAVAAILYFYL) form a helical membrane-spanning segment. Residues 225 to 265 (LFPNSLSLSERVAVVKGTYESEEDWEEQREERKKTMELTAH) lie on the Cytoplasmic side of the membrane.

Belongs to the MIP/aquaporin (TC 1.A.8) family. Homotetramer; each monomer provides an independent water pore. Interacts with TRPV4; the interaction is probably indirect and regulates TRPV4 activation by hypotonicity.

Its subcellular location is the apical cell membrane. The protein localises to the cell membrane. The protein resides in the cytoplasmic vesicle membrane. It carries out the reaction H2O(in) = H2O(out). Aquaporins form homotetrameric transmembrane channels, with each monomer independently mediating water transport across the plasma membrane along its osmotic gradient. Plays an important role in fluid secretion in salivary glands. Required for TRPV4 activation by hypotonicity. Together with TRPV4, controls regulatory volume decrease in salivary epithelial cells. Seems to play a redundant role in water transport in the eye, lung and in sweat glands. The polypeptide is Aquaporin-5 (Sus scrofa (Pig)).